The following is a 105-amino-acid chain: Nucleoid-associated protein Sca_0120 (105 aa).

The tract at residues 1-36 (MRGGGNMQQMMKQMQKMQKKMAEEQEKLKDEKVEGS) is disordered. Residues 7-16 (MQQMMKQMQK) show a composition bias toward low complexity. Basic and acidic residues predominate over residues 20 to 34 (KMAEEQEKLKDEKVE).

Belongs to the YbaB/EbfC family. In terms of assembly, homodimer.

It localises to the cytoplasm. The protein localises to the nucleoid. Functionally, binds to DNA and alters its conformation. May be involved in regulation of gene expression, nucleoid organization and DNA protection. The protein is Nucleoid-associated protein Sca_0120 of Staphylococcus carnosus (strain TM300).